The following is a 236-amino-acid chain: Ribonuclease 3 (236 aa).

Residues 13-138 enclose the RNase III domain; that stretch reads TEKVFKISGY…LIGAIYVDGG (126 aa). Glu-51 is a Mg(2+) binding site. Residue Asp-55 is part of the active site. Residues Asn-124 and Glu-127 each contribute to the Mg(2+) site. Glu-127 is a catalytic residue. The region spanning 164–232 is the DRBM domain; sequence DAKTALQEWA…AKLMLEKVTK (69 aa).

This sequence belongs to the ribonuclease III family. In terms of assembly, homodimer. It depends on Mg(2+) as a cofactor.

The protein resides in the cytoplasm. The catalysed reaction is Endonucleolytic cleavage to 5'-phosphomonoester.. Its function is as follows. Digests double-stranded RNA. Involved in the processing of primary rRNA transcript to yield the immediate precursors to the large and small rRNAs (23S and 16S). Processes some mRNAs, and tRNAs when they are encoded in the rRNA operon. Processes pre-crRNA and tracrRNA of type II CRISPR loci if present in the organism. The chain is Ribonuclease 3 from Anaplasma phagocytophilum (strain HZ).